A 717-amino-acid chain; its full sequence is Glutamate--cysteine ligase (717 aa).

Positions 484–576 (SKTTEQRAAK…TDSDHTDTDD (93 aa)) are disordered. 2 stretches are compositionally biased toward low complexity: residues 492-518 (AKAQ…NGNG) and 551-567 (GTTN…SNGT).

This sequence belongs to the glutamate--cysteine ligase type 3 family.

It carries out the reaction L-cysteine + L-glutamate + ATP = gamma-L-glutamyl-L-cysteine + ADP + phosphate + H(+). It catalyses the reaction (2S)-2-aminobutanoate + L-glutamate + ATP = gamma-L-glutamyl-(2S)-2-aminobutanoate + ADP + phosphate + H(+). It participates in sulfur metabolism; glutathione biosynthesis; glutathione from L-cysteine and L-glutamate: step 1/2. In terms of biological role, catalyzes the ATP-dependent ligation of L-glutamate and L-cysteine and participates in the first and rate-limiting step in glutathione biosynthesis. This chain is Glutamate--cysteine ligase, found in Drosophila melanogaster (Fruit fly).